The chain runs to 460 residues: uncharacterized protein (460 aa).

The segment at residues 1–33 (MKESNSRREFLSQSGKMVTAAALFGTSVPLAHA) is a signal peptide (tat-type signal).

This sequence belongs to the metallo-dependent hydrolases superfamily. Exported by the Tat system. The position of the signal peptide cleavage has not been experimentally proven. Can also be exported by the Sec system.

This is an uncharacterized protein from Escherichia coli (strain K12).